The following is a 259-amino-acid chain: Global transcriptional regulator CodY (259 aa).

The tract at residues 1–155 (MNLLQKTRKI…GATVVGMEIL (155 aa)) is GAF domain. Positions 203–222 (ASKIADRVGITRSVIVNALR) form a DNA-binding region, H-T-H motif. Serine 215 carries the phosphoserine modification.

It belongs to the CodY family.

It is found in the cytoplasm. In terms of biological role, DNA-binding global transcriptional regulator which is involved in the adaptive response to starvation and acts by directly or indirectly controlling the expression of numerous genes in response to nutrient availability. During rapid exponential growth, CodY is highly active and represses genes whose products allow adaptation to nutrient depletion. The protein is Global transcriptional regulator CodY of Geobacillus sp. (strain WCH70).